The primary structure comprises 432 residues: Adenylosuccinate synthetase (432 aa).

Residues Gly-13 to Lys-19 and Gly-41 to Thr-43 each bind GTP. Asp-14 functions as the Proton acceptor in the catalytic mechanism. The Mg(2+) site is built by Asp-14 and Gly-41. Residues Asp-14–Lys-17, Asn-39–His-42, Thr-130, Arg-144, Gln-225, Thr-240, and Arg-304 contribute to the IMP site. His-42 functions as the Proton donor in the catalytic mechanism. Ala-300–Arg-306 contributes to the substrate binding site. Residues Arg-306, Lys-332 to Asp-334, and Ser-415 to Gly-417 each bind GTP.

This sequence belongs to the adenylosuccinate synthetase family. Homodimer. Requires Mg(2+) as cofactor.

It localises to the cytoplasm. It carries out the reaction IMP + L-aspartate + GTP = N(6)-(1,2-dicarboxyethyl)-AMP + GDP + phosphate + 2 H(+). The protein operates within purine metabolism; AMP biosynthesis via de novo pathway; AMP from IMP: step 1/2. In terms of biological role, plays an important role in the de novo pathway of purine nucleotide biosynthesis. Catalyzes the first committed step in the biosynthesis of AMP from IMP. The polypeptide is Adenylosuccinate synthetase (Salmonella typhi).